We begin with the raw amino-acid sequence, 424 residues long: Putative pachytene checkpoint protein 2 (424 aa).

179-186 (GPPGTGKT) provides a ligand contact to ATP.

It belongs to the AAA ATPase family. PCH2 subfamily.

In terms of biological role, plays a key role in chromosome recombination during meiosis. The protein is Putative pachytene checkpoint protein 2 (pch-2) of Caenorhabditis elegans.